A 155-amino-acid chain; its full sequence is Ribosome-binding factor A (155 aa).

Basic and acidic residues-rich tracts occupy residues 116–125 (ARQRDQEVAR) and 142–155 (SPHE…ADGW). The segment at 116-155 (ARQRDQEVARQAEGATPAGDANPYKTSPHEGRPESEADGW) is disordered.

This sequence belongs to the RbfA family. In terms of assembly, monomer. Binds 30S ribosomal subunits, but not 50S ribosomal subunits or 70S ribosomes.

It is found in the cytoplasm. One of several proteins that assist in the late maturation steps of the functional core of the 30S ribosomal subunit. Associates with free 30S ribosomal subunits (but not with 30S subunits that are part of 70S ribosomes or polysomes). Required for efficient processing of 16S rRNA. May interact with the 5'-terminal helix region of 16S rRNA. The protein is Ribosome-binding factor A of Corynebacterium kroppenstedtii (strain DSM 44385 / JCM 11950 / CIP 105744 / CCUG 35717).